The chain runs to 30 residues: Brevinin-2Rg (30 aa).

C24 and C30 form a disulfide bridge.

In terms of tissue distribution, expressed by the skin glands.

The protein localises to the secreted. Antimicrobial peptide. The chain is Brevinin-2Rg from Pelophylax ridibundus (Marsh frog).